Here is a 175-residue protein sequence, read N- to C-terminus: ATP synthase subunit delta (175 aa).

This sequence belongs to the ATPase delta chain family. As to quaternary structure, F-type ATPases have 2 components, F(1) - the catalytic core - and F(0) - the membrane proton channel. F(1) has five subunits: alpha(3), beta(3), gamma(1), delta(1), epsilon(1). F(0) has three main subunits: a(1), b(2) and c(10-14). The alpha and beta chains form an alternating ring which encloses part of the gamma chain. F(1) is attached to F(0) by a central stalk formed by the gamma and epsilon chains, while a peripheral stalk is formed by the delta and b chains.

It is found in the cell inner membrane. In terms of biological role, f(1)F(0) ATP synthase produces ATP from ADP in the presence of a proton or sodium gradient. F-type ATPases consist of two structural domains, F(1) containing the extramembraneous catalytic core and F(0) containing the membrane proton channel, linked together by a central stalk and a peripheral stalk. During catalysis, ATP synthesis in the catalytic domain of F(1) is coupled via a rotary mechanism of the central stalk subunits to proton translocation. Functionally, this protein is part of the stalk that links CF(0) to CF(1). It either transmits conformational changes from CF(0) to CF(1) or is implicated in proton conduction. This Xanthomonas campestris pv. campestris (strain 8004) protein is ATP synthase subunit delta.